The chain runs to 361 residues: tRNA N6-adenosine threonylcarbamoyltransferase (361 aa).

Residues His110 and His114 each contribute to the Fe cation site. Residues 132–136 (LVSGG), Asp165, Gly178, Asp182, and Asn289 contribute to the substrate site. Asp317 is a binding site for Fe cation.

The protein belongs to the KAE1 / TsaD family. It depends on Fe(2+) as a cofactor.

It is found in the cytoplasm. It carries out the reaction L-threonylcarbamoyladenylate + adenosine(37) in tRNA = N(6)-L-threonylcarbamoyladenosine(37) in tRNA + AMP + H(+). Its function is as follows. Required for the formation of a threonylcarbamoyl group on adenosine at position 37 (t(6)A37) in tRNAs that read codons beginning with adenine. Is involved in the transfer of the threonylcarbamoyl moiety of threonylcarbamoyl-AMP (TC-AMP) to the N6 group of A37, together with TsaE and TsaB. TsaD likely plays a direct catalytic role in this reaction. The chain is tRNA N6-adenosine threonylcarbamoyltransferase from Nitratidesulfovibrio vulgaris (strain ATCC 29579 / DSM 644 / CCUG 34227 / NCIMB 8303 / VKM B-1760 / Hildenborough) (Desulfovibrio vulgaris).